The chain runs to 462 residues: Glutamate--tRNA ligase 1 (462 aa).

The 'HIGH' region signature appears at 8–18; sequence PSPTGYLHIGG. The 'KMSKS' region motif lies at 236–240; it reads KLSKR. Lys-239 contacts ATP.

The protein belongs to the class-I aminoacyl-tRNA synthetase family. Glutamate--tRNA ligase type 1 subfamily. As to quaternary structure, monomer.

It is found in the cytoplasm. The enzyme catalyses tRNA(Glu) + L-glutamate + ATP = L-glutamyl-tRNA(Glu) + AMP + diphosphate. Its function is as follows. Catalyzes the attachment of glutamate to tRNA(Glu) in a two-step reaction: glutamate is first activated by ATP to form Glu-AMP and then transferred to the acceptor end of tRNA(Glu). This Sulfurovum sp. (strain NBC37-1) protein is Glutamate--tRNA ligase 1.